The following is a 562-amino-acid chain: Tissue-type plasminogen activator (562 aa).

Positions 1–19 (MYALKRELWCVLLLCGAIC) are cleaved as a signal peptide. A propeptide spanning residues 20–32 (TSPSQETHRRLRR) is cleaved from the precursor. Positions 33–35 (GVR) are cleaved as a propeptide — removed by plasmin. One can recognise a Fibronectin type-I domain in the interval 39–81 (VTCRDEKTQMIYQQHQSWLRPLLRGNRVEHCWCNDGQTQCHSV). Intrachain disulfides connect Cys-41–Cys-71, Cys-69–Cys-78, Cys-86–Cys-97, Cys-91–Cys-108, Cys-110–Cys-119, Cys-127–Cys-208, Cys-148–Cys-190, Cys-179–Cys-203, Cys-215–Cys-296, Cys-236–Cys-278, Cys-267–Cys-291, Cys-299–Cys-430, Cys-342–Cys-358, Cys-350–Cys-419, Cys-444–Cys-519, Cys-476–Cys-492, and Cys-509–Cys-537. Residues 42–52 (RDEKTQMIYQQ) form an important for binding to annexin A2 region. Residues 82 to 120 (PVKSCSEPRCFNGGTCLQAIYFSDFVCQCPVGFIGRQCE) form the EGF-like domain. O-linked (Fuc) threonine glycosylation occurs at Thr-96. Kringle domains follow at residues 126–208 (TCYE…TPAC) and 214–296 (ECYT…LPQC). Residue Asn-152 is glycosylated (N-linked (GlcNAc...) asparagine). The Peptidase S1 domain occupies 311-561 (IKGGLYADIT…YLNWIRDNTR (251 aa)). Active-site charge relay system residues include His-357 and Asp-406. The N-linked (GlcNAc...) asparagine glycan is linked to Asn-483. The Charge relay system role is filled by Ser-513.

The protein belongs to the peptidase S1 family. Heterodimer of chain A and chain B held by a disulfide bond. Binds to fibrin with high affinity. This interaction leads to an increase in the catalytic efficiency of the enzyme due to an increase in affinity for plasminogen. Similarly, binding to heparin increases the activation of plasminogen. Binds to annexin A2, cytokeratin-8, fibronectin and laminin. Binds to mannose receptor and the low-density lipoprotein receptor-related protein (LRP1); these proteins are involved in TPA clearance. Binds LRP1B; binding is followed by internalization and degradation. Forms heterodimer with SERPINA5. Interacts with SERPINE1. In complex with SERPINE1, interacts with SORL1. Post-translationally, the single chain, almost fully active enzyme, can be further processed into a two-chain fully active form by a cleavage after Arg-310 catalyzed by plasmin, tissue kallikrein or factor Xa.

It is found in the secreted. The protein localises to the extracellular space. It carries out the reaction Specific cleavage of Arg-|-Val bond in plasminogen to form plasmin.. With respect to regulation, inhibited by SERPINA5. Inhibited by SERPINE1. Converts the abundant, but inactive, zymogen plasminogen to plasmin by hydrolyzing a single Arg-Val bond in plasminogen. By controlling plasmin-mediated proteolysis, it plays an important role in tissue remodeling and degradation, in cell migration and many other physiopathological events. During oocyte activation, plays a role in cortical granule reaction in the zona reaction, which contributes to the block to polyspermy. This Sus scrofa (Pig) protein is Tissue-type plasminogen activator (PLAT).